Reading from the N-terminus, the 186-residue chain is RNA polymerase sigma factor NccH (186 aa).

The Polymerase core binding signature appears at 49–62 (DIVQDTFIAAWHAL). The segment at residues 152 to 171 (HPEAAMALGTSAKAVESRVA) is a DNA-binding region (H-T-H motif).

Belongs to the sigma-70 factor family. ECF subfamily.

In terms of biological role, sigma factors are initiation factors that promote the attachment of RNA polymerase to specific initiation sites and are then released. This sigma factor regulates the genes for a membrane-located efflux system that confers resistance to nickel, cobalt and cadmium. This is RNA polymerase sigma factor NccH (nccH) from Alcaligenes xylosoxydans xylosoxydans (Achromobacter xylosoxidans).